We begin with the raw amino-acid sequence, 276 residues long: MQAMKPRINHNRLDENSFYKNGHIHHVRVQDQTIGWVRRVDRSIRTTVEFVVNVLQDYLTDAECSDFDVSHNIKEYLLKIPVVKSLEEMEDYLKQIPDGNISSTLAHIVSIPLGIPIEPYDLLVTDYQDTLHSFIDKIDNQAVREYLLPKIKSLKIGYWCAYTFLPETINQFHPLYLSWLDNKRVFSPNTLQLSEETRDKLDNFLEMYDIPDIGFFSVGDNGSKIIGWDYNYYRHTFCYVNLHEASNEVRKVWEFANQHFHIDTDFEQLEQLEQLE.

This is an uncharacterized protein from Acanthamoeba polyphaga mimivirus (APMV).